We begin with the raw amino-acid sequence, 178 residues long: Cytochrome b6-f complex iron-sulfur subunit (178 aa).

Residues 20–42 form a helical membrane-spanning segment; the sequence is LLTFGTATGVALGALYPVANYFM. In terms of domain architecture, Rieske spans 65-161; it reads KTGWLATHQA…VDIEDDAVLV (97 aa). Positions 107, 109, 125, and 128 each coordinate [2Fe-2S] cluster. A disulfide bridge links C112 with C127.

This sequence belongs to the Rieske iron-sulfur protein family. As to quaternary structure, the 4 large subunits of the cytochrome b6-f complex are cytochrome b6, subunit IV (17 kDa polypeptide, PetD), cytochrome f and the Rieske protein, while the 4 small subunits are PetG, PetL, PetM and PetN. The complex functions as a dimer. [2Fe-2S] cluster is required as a cofactor.

It is found in the cellular thylakoid membrane. It catalyses the reaction 2 oxidized [plastocyanin] + a plastoquinol + 2 H(+)(in) = 2 reduced [plastocyanin] + a plastoquinone + 4 H(+)(out). Component of the cytochrome b6-f complex, which mediates electron transfer between photosystem II (PSII) and photosystem I (PSI), cyclic electron flow around PSI, and state transitions. This chain is Cytochrome b6-f complex iron-sulfur subunit, found in Prochlorococcus marinus (strain MIT 9312).